The chain runs to 157 residues: 3-hydroxyacyl-[acyl-carrier-protein] dehydratase FabZ (157 aa).

Residue H58 is part of the active site.

The protein belongs to the thioester dehydratase family. FabZ subfamily.

The protein localises to the cytoplasm. The enzyme catalyses a (3R)-hydroxyacyl-[ACP] = a (2E)-enoyl-[ACP] + H2O. Its function is as follows. Involved in unsaturated fatty acids biosynthesis. Catalyzes the dehydration of short chain beta-hydroxyacyl-ACPs and long chain saturated and unsaturated beta-hydroxyacyl-ACPs. The chain is 3-hydroxyacyl-[acyl-carrier-protein] dehydratase FabZ from Brucella ovis (strain ATCC 25840 / 63/290 / NCTC 10512).